The following is a 428-amino-acid chain: S-adenosylmethionine synthase (428 aa).

His14 lines the ATP pocket. Asp16 contacts Mg(2+). Glu42 contacts K(+). The L-methionine site is built by Glu55 and Gln98. Residues 98–108 (QSGDINRGVER) are flexible loop. ATP contacts are provided by residues 165 to 167 (DAK), 251 to 252 (KF), Asp260, 266 to 267 (RK), Ala283, and Lys287. Residue Asp260 participates in L-methionine binding. Lys291 serves as a coordination point for L-methionine.

Belongs to the AdoMet synthase family. Homotetramer; dimer of dimers. The cofactor is Mg(2+). K(+) is required as a cofactor.

It is found in the cytoplasm. The enzyme catalyses L-methionine + ATP + H2O = S-adenosyl-L-methionine + phosphate + diphosphate. It functions in the pathway amino-acid biosynthesis; S-adenosyl-L-methionine biosynthesis; S-adenosyl-L-methionine from L-methionine: step 1/1. Its function is as follows. Catalyzes the formation of S-adenosylmethionine (AdoMet) from methionine and ATP. The overall synthetic reaction is composed of two sequential steps, AdoMet formation and the subsequent tripolyphosphate hydrolysis which occurs prior to release of AdoMet from the enzyme. The chain is S-adenosylmethionine synthase from Parabacteroides distasonis (strain ATCC 8503 / DSM 20701 / CIP 104284 / JCM 5825 / NCTC 11152).